The primary structure comprises 320 residues: Pyrroline-5-carboxylate reductase 2 (320 aa).

Ser-2 is subject to N-acetylserine. NADP(+) contacts are provided by residues 6 to 11 (IGAGQL) and Ser-34. Ala-8, Gln-10, Leu-11, Ser-34, Glu-36, Asn-56, Val-70, Lys-71, and Ala-97 together coordinate NADPH. Residues Asn-56, 69-72 (AVKP), and 95-97 (CAA) contribute to the NADP(+) site. Glu-164 is a binding site for L-proline. Asn-230 provides a ligand contact to NADPH. L-proline-binding residues include Ala-237 and Thr-238. Positions 293-320 (ESPTVSTLAPPSSGKLLTRNPAQGSKRE) are disordered. Ser-304 is modified (phosphoserine).

Belongs to the pyrroline-5-carboxylate reductase family. In terms of assembly, homodecamer; composed of 5 homodimers. Interacts with LTO1.

The protein localises to the cytoplasm. Its subcellular location is the mitochondrion. It carries out the reaction L-proline + NADP(+) = (S)-1-pyrroline-5-carboxylate + NADPH + 2 H(+). It catalyses the reaction L-proline + NAD(+) = (S)-1-pyrroline-5-carboxylate + NADH + 2 H(+). It functions in the pathway amino-acid biosynthesis; L-proline biosynthesis; L-proline from L-glutamate 5-semialdehyde: step 1/1. In terms of biological role, oxidoreductase that catalyzes the last step in proline biosynthesis, which corresponds to the reduction of pyrroline-5-carboxylate to L-proline using NAD(P)H. At physiologic concentrations, has higher specific activity in the presence of NADH. Involved in cellular response to oxidative stress. In some cell types, such as erythrocytes, its primary function may be the generation of NADP(+). This chain is Pyrroline-5-carboxylate reductase 2, found in Rattus norvegicus (Rat).